Reading from the N-terminus, the 446-residue chain is Probable D-serine dehydratase (446 aa).

The residue at position 116 (lysine 116) is an N6-(pyridoxal phosphate)lysine.

It belongs to the serine/threonine dehydratase family. DsdA subfamily. Pyridoxal 5'-phosphate is required as a cofactor.

The catalysed reaction is D-serine = pyruvate + NH4(+). This is Probable D-serine dehydratase from Bacillus thuringiensis subsp. konkukian (strain 97-27).